The sequence spans 260 residues: MAIIDSFVGSSKISARDLNVHYGEKQALFDVNLDIPVGQVTALIGPSGCGKSTFLRCINRMNDLVEIARVSGSLFLDGIDIQDAAMDVVQLRARVGMVFQRPNPFPKSIYENVAFGPRLHGLAAGADELDEIVISSLDKAGLWGEVKDRMGETGTSLSGGQQQRLCIARAIAVAPEVILMDEPCSALDPIATAAVEELIDELRGSYTIVIVTHSMQQAARVSQRTGFFHLGKLIEMGETESMFTSPQHPLTQGYITGRFG.

An ABC transporter domain is found at 13–255 (ISARDLNVHY…PQHPLTQGYI (243 aa)). ATP is bound at residue 45-52 (GPSGCGKS).

Belongs to the ABC transporter superfamily. Phosphate importer (TC 3.A.1.7) family. The complex is composed of two ATP-binding proteins (PstB), two transmembrane proteins (PstC and PstA) and a solute-binding protein (PstS).

The protein localises to the cell inner membrane. It catalyses the reaction phosphate(out) + ATP + H2O = ADP + 2 phosphate(in) + H(+). In terms of biological role, part of the ABC transporter complex PstSACB involved in phosphate import. Responsible for energy coupling to the transport system. The chain is Phosphate import ATP-binding protein PstB 1 from Paramagnetospirillum magneticum (strain ATCC 700264 / AMB-1) (Magnetospirillum magneticum).